The chain runs to 400 residues: Large envelope protein (400 aa).

Met1 carries the N-acetylmethionine modification. Gly2 carries N-myristoyl glycine; by host lipidation. The pre-S1 stretch occupies residues 2 to 119 (GAPLSTTRRG…PPLRDTHPQA (118 aa)). The tract at residues 2 to 174 (GAPLSTTRRG…FLKTGGPATN (173 aa)) is pre-S. Topologically, residues 2-181 (GAPLSTTRRG…ATNMDNITSG (180 aa)) are virion surface; in external conformation. Residues 2 to 253 (GAPLSTTRRG…PGYRWMCLRR (252 aa)) are Intravirion; in internal conformation-facing. A glycan (N-linked (GlcNAc...) asparagine) is linked at Pro4. A disordered region spans residues 84 to 114 (VLTTLPADPPPASTNRRSGRKPTPVSPPLRD). Residues 120-174 (MQWNSTQFHQALLDPRVRALYFPAGGSSSETQNPAPTIASLTSSIFLKTGGPATN) are pre-S2. Residues 182-202 (LLGPLLVLQAVCFLLTKILTI) traverse the membrane as a helical segment. At 203–253 (PQSLDSWWTSLNFLGGTPGCPGQNSQSPTSNHLPTSCPPTCPGYRWMCLRR) the chain is on the intravirion; in external conformation side. Residues 254-274 (FIIFLFILLLCLIFLLVLVDY) traverse the membrane as a helical segment. Over 275–348 (QGMLPVCPPL…WASARFSWLS (74 aa)) the chain is Virion surface. An N-linked (GlcNAc...) asparagine; by host glycan is attached at Asn320. Residues 349–369 (LLVQFVQWCVGLSPTVWLLVI) traverse the membrane as a helical segment. Residues 370–375 (WMIWYW) lie on the Intravirion side of the membrane. Residues 376–398 (GPNLCSILSPFIPLLPIFCYLWV) form a helical membrane-spanning segment. Residues 399-400 (SI) are Virion surface-facing.

The protein belongs to the orthohepadnavirus major surface antigen family. As to quaternary structure, in its internal form (Li-HBsAg), interacts with the capsid protein and with the isoform S. Interacts with host chaperone CANX. In terms of assembly, associates with host chaperone CANX through its pre-S2 N glycan; this association may be essential for isoform M proper secretion. Interacts with isoform L. Interacts with the antigens of satellite virus HDV (HDVAgs); this interaction is required for encapsidation of HDV genomic RNA. Post-translationally, isoform M is N-terminally acetylated by host at a ratio of 90%, and N-glycosylated by host at the pre-S2 region. In terms of processing, myristoylated.

It is found in the virion membrane. In terms of biological role, the large envelope protein exists in two topological conformations, one which is termed 'external' or Le-HBsAg and the other 'internal' or Li-HBsAg. In its external conformation the protein attaches the virus to cell receptors and thereby initiating infection. This interaction determines the species specificity and liver tropism. This attachment induces virion internalization predominantly through caveolin-mediated endocytosis. The large envelope protein also assures fusion between virion membrane and endosomal membrane. In its internal conformation the protein plays a role in virion morphogenesis and mediates the contact with the nucleocapsid like a matrix protein. The middle envelope protein plays an important role in the budding of the virion. It is involved in the induction of budding in a nucleocapsid independent way. In this process the majority of envelope proteins bud to form subviral lipoprotein particles of 22 nm of diameter that do not contain a nucleocapsid. This chain is Large envelope protein, found in Homo sapiens (Human).